A 362-amino-acid chain; its full sequence is Sulfate/thiosulfate import ATP-binding protein CysA (362 aa).

Positions Ile13–Leu243 constitute an ABC transporter domain. Gly45–Ser52 contributes to the ATP binding site.

This sequence belongs to the ABC transporter superfamily. Sulfate/tungstate importer (TC 3.A.1.6) family. In terms of assembly, the complex is composed of two ATP-binding proteins (CysA), two transmembrane proteins (CysT and CysW) and a solute-binding protein (CysP).

The protein resides in the cell membrane. The catalysed reaction is sulfate(out) + ATP + H2O = sulfate(in) + ADP + phosphate + H(+). The enzyme catalyses thiosulfate(out) + ATP + H2O = thiosulfate(in) + ADP + phosphate + H(+). Functionally, part of the ABC transporter complex CysAWTP involved in sulfate/thiosulfate import. Responsible for energy coupling to the transport system. This Mycolicibacterium paratuberculosis (strain ATCC BAA-968 / K-10) (Mycobacterium paratuberculosis) protein is Sulfate/thiosulfate import ATP-binding protein CysA.